The chain runs to 37 residues: Photosystem II reaction center protein L (37 aa).

Residues 1–13 (MEPNPNRQPVELN) are Cytoplasmic-facing. A helical membrane pass occupies residues 14–35 (RTSLYLGLLLILVLALLFSSYF). Residues 36–37 (FN) are Lumenal-facing.

As to quaternary structure, PSII is composed of 1 copy each of membrane proteins PsbA, PsbB, PsbC, PsbD, PsbE, PsbF, PsbH, PsbI, PsbJ, PsbK, PsbL, PsbM, PsbT, PsbX, PsbY, PsbZ, Psb30/Ycf12, peripheral proteins PsbO, CyanoQ (PsbQ), PsbU, PsbV and a large number of cofactors. It forms dimeric complexes. Part of a photosystem II (PSII) assembly intermediate complex PSII-I; crystallized from a strain deleted of psbJ, it forms monomeric PSII before addition of the oxygen evolving complex. PSII-I includes 3 assembly factors not found in mature PSII (Psb27, Psb28 and Psb34). The cofactor is PSII binds multiple chlorophylls, carotenoids and specific lipids..

Its subcellular location is the cellular thylakoid membrane. One of the components of the core complex of photosystem II (PSII). PSII is a light-driven water:plastoquinone oxidoreductase that uses light energy to abstract electrons from H(2)O, generating O(2) and a proton gradient subsequently used for ATP formation. It consists of a core antenna complex that captures photons, and an electron transfer chain that converts photonic excitation into a charge separation. This subunit is found at the monomer-monomer interface and is required for correct PSII assembly and/or dimerization. This subunit may make specific contacts with lipid(s). The sequence is that of Photosystem II reaction center protein L from Thermosynechococcus vestitus (strain NIES-2133 / IAM M-273 / BP-1).